A 162-amino-acid polypeptide reads, in one-letter code: Sec-independent protein translocase protein TatB (162 aa).

The chain crosses the membrane as a helical span at residues 1–21 (MFDLGWTELLVIGVVALIVVG). 2 disordered regions span residues 69-111 (ATNP…DRAE) and 124-162 (AADR…ETKA). Basic and acidic residues-rich tracts occupy residues 83–111 (ATRD…DRAE) and 124–141 (AADR…KAEE). Positions 144–155 (AALSATPASTAS) are enriched in low complexity.

The protein belongs to the TatB family. The Tat system comprises two distinct complexes: a TatABC complex, containing multiple copies of TatA, TatB and TatC subunits, and a separate TatA complex, containing only TatA subunits. Substrates initially bind to the TatABC complex, which probably triggers association of the separate TatA complex to form the active translocon.

The protein resides in the cell inner membrane. Part of the twin-arginine translocation (Tat) system that transports large folded proteins containing a characteristic twin-arginine motif in their signal peptide across membranes. Together with TatC, TatB is part of a receptor directly interacting with Tat signal peptides. TatB may form an oligomeric binding site that transiently accommodates folded Tat precursor proteins before their translocation. In Ruegeria sp. (strain TM1040) (Silicibacter sp.), this protein is Sec-independent protein translocase protein TatB.